We begin with the raw amino-acid sequence, 1087 residues long: Exportin-7-A (1087 aa).

In terms of domain architecture, Importin N-terminal spans 30-96; it reads AEKALVEFTN…RNYVLTYLAT (67 aa).

It belongs to the exportin family. As to expression, expressed in oocytes (at protein level).

It localises to the cytoplasm. Its subcellular location is the nucleus. Mediates the nuclear export of proteins (cargos) with broad substrate specificity. This is Exportin-7-A (xpo7-a) from Xenopus laevis (African clawed frog).